Consider the following 447-residue polypeptide: Glutamyl-tRNA reductase (447 aa).

Substrate is bound by residues 49-52, serine 109, 114-116, and glutamine 120; these read TCNR and EQQ. The active-site Nucleophile is cysteine 50. 189–194 provides a ligand contact to NADP(+); sequence GAGSMG.

This sequence belongs to the glutamyl-tRNA reductase family. As to quaternary structure, homodimer.

It carries out the reaction (S)-4-amino-5-oxopentanoate + tRNA(Glu) + NADP(+) = L-glutamyl-tRNA(Glu) + NADPH + H(+). It participates in porphyrin-containing compound metabolism; protoporphyrin-IX biosynthesis; 5-aminolevulinate from L-glutamyl-tRNA(Glu): step 1/2. Functionally, catalyzes the NADPH-dependent reduction of glutamyl-tRNA(Glu) to glutamate 1-semialdehyde (GSA). The sequence is that of Glutamyl-tRNA reductase from Mycobacterium sp. (strain JLS).